A 369-amino-acid chain; its full sequence is Uroporphyrinogen decarboxylase (369 aa).

The coproporphyrinogen I site is built by Arg-39, Ala-41, Arg-43, Arg-52, Asp-88, Tyr-166, Ser-221, and His-341. The coproporphyrinogen III site is built by Arg-39, Ala-41, and Arg-43. Asp-88, Tyr-166, Ser-221, and His-341 together coordinate coproporphyrinogen III.

Belongs to the uroporphyrinogen decarboxylase family. As to quaternary structure, homodimer.

The protein localises to the cytoplasm. Its subcellular location is the cytosol. It catalyses the reaction uroporphyrinogen III + 4 H(+) = coproporphyrinogen III + 4 CO2. The catalysed reaction is uroporphyrinogen I + 4 H(+) = coproporphyrinogen I + 4 CO2. It participates in porphyrin-containing compound metabolism; protoporphyrin-IX biosynthesis; coproporphyrinogen-III from 5-aminolevulinate: step 4/4. Its function is as follows. Catalyzes the sequential decarboxylation of the four acetate side chains of uroporphyrinogen to form coproporphyrinogen and participates in the fifth step in the heme biosynthetic pathway. Isomer I or isomer III of uroporphyrinogen may serve as substrate, but only coproporphyrinogen III can ultimately be converted to heme. In vitro also decarboxylates pentacarboxylate porphyrinogen I. This is Uroporphyrinogen decarboxylase from Danio rerio (Zebrafish).